A 425-amino-acid chain; its full sequence is Putative nucleoside transporter YegT (425 aa).

Topologically, residues 1 to 8 (MKTTAKLS) are periplasmic. A helical transmembrane segment spans residues 9–29 (FMMFVEWFIWGAWFVPLWLWL). The Cytoplasmic portion of the chain corresponds to 30 to 38 (SKSGFSAGE). Residues 39–59 (IGWSYACTAIAAILSPILVGS) traverse the membrane as a helical segment. The Periplasmic portion of the chain corresponds to 60-63 (ITDR). The helical transmembrane segment at 64–84 (FFSAQKVLAVLMFAGALLMYF) threads the bilayer. Over 85-90 (AAQQTT) the chain is Cytoplasmic. Residues 91-111 (FAGFFPLLLAYSLTYMPTIAL) form a helical membrane-spanning segment. Over 112–131 (TNSIAFANVPDVERDFPRIR) the chain is Periplasmic. The helical transmembrane segment at 132 to 152 (VMGTIGWIASGLACGFLPQIL) threads the bilayer. The Cytoplasmic segment spans residues 153–161 (GYADISPTN). A helical transmembrane segment spans residues 162 to 182 (IPLLITAGSSALLGVFAFFLP). Residues 183-210 (DTPPKSTGKMDIKVMLGLDALILLRDKN) lie on the Periplasmic side of the membrane. Residues 211–231 (FLVFFFCSFLFAMPLAFYYIF) traverse the membrane as a helical segment. The Cytoplasmic portion of the chain corresponds to 232–244 (ANGYLTEVGMKNA). Residues 245 to 265 (TGWMTLGQFSEIFFMLALPFF) form a helical membrane-spanning segment. The Periplasmic segment spans residues 266–287 (TKRFGIKKVLLLGLVTAAIRYG). A helical membrane pass occupies residues 288 to 308 (FFIYGSADEYFTYALLFLGIL). Residues 309–339 (LHGVSYDFYYVTAYIYVDKKAPVHMRTAAQG) lie on the Cytoplasmic side of the membrane. Residues 340–360 (LITLCCQGFGSLLGYRLGGVM) form a helical membrane-spanning segment. The Periplasmic segment spans residues 361–379 (MEKMFAYQEPVNGLTFNWS). A helical transmembrane segment spans residues 380-400 (GMWTFGAVMIAIIAVLFMIFF). Topologically, residues 401–425 (RESDNEITAIKVDDRDIALTQGEVK) are cytoplasmic.

Belongs to the major facilitator superfamily. Nucleoside:H(+) symporter (NHS) (TC 2.A.1.10) family.

It localises to the cell inner membrane. Functionally, could be involved in nucleoside transport. This chain is Putative nucleoside transporter YegT (yegT), found in Escherichia coli (strain K12).